A 431-amino-acid polypeptide reads, in one-letter code: Phosphate regulon sensor protein PhoR (431 aa).

At 1-9 (MLERLSWKR) the chain is on the cytoplasmic side. The chain crosses the membrane as a helical span at residues 10 to 28 (LVLELLLCCLPAFILGAFF). Residues 29–32 (GYLP) lie on the Periplasmic side of the membrane. The chain crosses the membrane as a helical span at residues 33–51 (WFLLASVTGLLIWHFWNLL). The Cytoplasmic segment spans residues 52–431 (RLSWWLWVDR…PERLIAKNSD (380 aa)). In terms of domain architecture, PAS spans 96–172 (LIKRFRSGAE…RPLNLVLNTG (77 aa)). Residues 210 to 425 (NVSHELRTPL…RFSFVIPERL (216 aa)) enclose the Histidine kinase domain. Residue His-213 is modified to Phosphohistidine; by autocatalysis.

The protein resides in the cell inner membrane. It catalyses the reaction ATP + protein L-histidine = ADP + protein N-phospho-L-histidine.. Its function is as follows. Member of the two-component regulatory system PhoR/PhoB involved in the phosphate regulon genes expression. PhoR may function as a membrane-associated protein kinase that phosphorylates PhoB in response to environmental signals. The protein is Phosphate regulon sensor protein PhoR (phoR) of Escherichia coli (strain K12).